A 1118-amino-acid polypeptide reads, in one-letter code: Receptor-type guanylate cyclase gcy-2 (1118 aa).

A signal peptide spans 1–21 (MVSSILKFVILIHSTFHSTFA). Topologically, residues 22–494 (QNLPDTTVAP…FCPISFWEQY (473 aa)) are extracellular. Residues Asn-222, Asn-351, Asn-361, Asn-387, Asn-420, and Asn-452 are each glycosylated (N-linked (GlcNAc...) asparagine). Residues 495–515 (MILAIVSISVIVLMVIIMIIG) traverse the membrane as a helical segment. Residues 516 to 1118 (CLCVISAKHA…FKMDTLKVAN (603 aa)) lie on the Cytoplasmic side of the membrane. The 318-residue stretch at 558–875 (LQSAPSISTG…EGFDSVTVFF (318 aa)) folds into the Protein kinase domain. The Guanylate cyclase domain maps to 872–1002 (TVFFSDVVKF…DTVNTASRME (131 aa)). The segment at 1076 to 1103 (WITPPAPKPEIRSVSSHGSRPPSVYDPL) is disordered.

Belongs to the adenylyl cyclase class-4/guanylyl cyclase family. As to expression, expressed bilaterally in AWA and ASI sensory neurons and in RIA and PVT interneurons.

Its subcellular location is the cell membrane. The enzyme catalyses GTP = 3',5'-cyclic GMP + diphosphate. Its function is as follows. Guanylate cyclase involved in the production of the second messenger cGMP. In Caenorhabditis elegans, this protein is Receptor-type guanylate cyclase gcy-2.